The following is a 227-amino-acid chain: uncharacterized protein (227 aa).

Positions 3–119 (RADFCIIGLG…STMGIREALI (117 aa)) constitute an RCK N-terminal domain. The region spanning 134-221 (HGLENEIINL…LNKYLNYINP (88 aa)) is the RCK C-terminal domain.

This is an uncharacterized protein from Mycoplasma genitalium (strain ATCC 33530 / DSM 19775 / NCTC 10195 / G37) (Mycoplasmoides genitalium).